A 32-amino-acid polypeptide reads, in one-letter code: Hainantoxin F8-35.23 (32 aa).

In terms of tissue distribution, expressed by the venom gland.

It localises to the secreted. This Cyriopagopus hainanus (Chinese bird spider) protein is Hainantoxin F8-35.23.